The chain runs to 162 residues: Ribosome-binding factor A (162 aa).

The disordered stretch occupies residues 121–162 (DEVARVAAGASPAGDPDPYKEPRAEDADDAEVDEPSGSRQAD). Residues 125–136 (RVAAGASPAGDP) show a composition bias toward low complexity.

It belongs to the RbfA family. As to quaternary structure, monomer. Binds 30S ribosomal subunits, but not 50S ribosomal subunits or 70S ribosomes.

The protein localises to the cytoplasm. One of several proteins that assist in the late maturation steps of the functional core of the 30S ribosomal subunit. Associates with free 30S ribosomal subunits (but not with 30S subunits that are part of 70S ribosomes or polysomes). Required for efficient processing of 16S rRNA. May interact with the 5'-terminal helix region of 16S rRNA. This chain is Ribosome-binding factor A, found in Rhodococcus jostii (strain RHA1).